A 662-amino-acid chain; its full sequence is p-hydroxybenzoic acid efflux pump subunit AaeB (662 aa).

11 consecutive transmembrane segments (helical) span residues 22 to 42 (FAFK…HLQL), 52 to 72 (AAIV…SGAI), 76 to 96 (GMLR…IIIA), 102 to 122 (VVML…SSLV), 129 to 149 (IFGL…GTPL), 161 to 181 (EIVL…PRSI), 378 to 398 (LFWL…IAVV), 415 to 435 (FLFG…FIMP), 439 to 459 (QSML…GLEV), 465 to 485 (GSLG…PMTF), and 491 to 511 (LDSA…IMLI).

This sequence belongs to the aromatic acid exporter ArAE (TC 2.A.85) family.

The protein resides in the cell inner membrane. Functionally, forms an efflux pump with AaeA. Could function as a metabolic relief valve, allowing to eliminate certain compounds when they accumulate to high levels in the cell. The protein is p-hydroxybenzoic acid efflux pump subunit AaeB of Pectobacterium atrosepticum (strain SCRI 1043 / ATCC BAA-672) (Erwinia carotovora subsp. atroseptica).